The sequence spans 250 residues: Lectin 1 (250 aa).

N-linked (GlcNAc...) asparagine; partial glycosylation is present at N119. Positions 128 and 130 each coordinate Mn(2+). Residues D130, Y132, N138, and D141 each coordinate Ca(2+). D141 and H146 together coordinate Mn(2+).

This sequence belongs to the leguminous lectin family.

Di-N-acetylchitobiose specific lectin. The polypeptide is Lectin 1 (Laburnum alpinum (Scotch laburnum)).